Here is a 447-residue protein sequence, read N- to C-terminus: N-succinylarginine dihydrolase (447 aa).

Substrate is bound by residues A19–S28, N110, and H137–R138. Residue E174 is part of the active site. Residue R212 participates in substrate binding. H248 is a catalytic residue. Substrate is bound by residues D250 and N359. Catalysis depends on C365, which acts as the Nucleophile.

It belongs to the succinylarginine dihydrolase family. In terms of assembly, homodimer.

The catalysed reaction is N(2)-succinyl-L-arginine + 2 H2O + 2 H(+) = N(2)-succinyl-L-ornithine + 2 NH4(+) + CO2. The protein operates within amino-acid degradation; L-arginine degradation via AST pathway; L-glutamate and succinate from L-arginine: step 2/5. Its function is as follows. Catalyzes the hydrolysis of N(2)-succinylarginine into N(2)-succinylornithine, ammonia and CO(2). The sequence is that of N-succinylarginine dihydrolase from Salmonella paratyphi B (strain ATCC BAA-1250 / SPB7).